We begin with the raw amino-acid sequence, 119 residues long: Holo-[acyl-carrier-protein] synthase (119 aa).

Mg(2+) is bound by residues Asp-8 and Glu-58.

This sequence belongs to the P-Pant transferase superfamily. AcpS family. The cofactor is Mg(2+).

It is found in the cytoplasm. The catalysed reaction is apo-[ACP] + CoA = holo-[ACP] + adenosine 3',5'-bisphosphate + H(+). Functionally, transfers the 4'-phosphopantetheine moiety from coenzyme A to a Ser of acyl-carrier-protein. In Geobacillus sp. (strain WCH70), this protein is Holo-[acyl-carrier-protein] synthase.